The primary structure comprises 562 residues: Tripeptidyl-peptidase 1 (562 aa).

The signal sequence occupies residues Met1–Cys19. Residues Thr20–Ser194 constitute a propeptide, removed in mature form. An intrachain disulfide couples Cys111 to Cys122. A Peptidase S53 domain is found at Gly198 to Pro562. N-linked (GlcNAc...) asparagine glycosylation is present at Asn209. The N-linked (GlcNAc...) (high mannose) asparagine glycan is linked to Asn221. Active-site charge relay system residues include Glu271 and Asp275. N-linked (GlcNAc...) asparagine glycosylation is found at Asn285, Asn312, and Asn442. Intrachain disulfides connect Cys364–Cys525 and Cys521–Cys536. Residue Ser474 is the Charge relay system of the active site. 2 residues coordinate Ca(2+): Asp516 and Val517. Gly538, Gly540, and Asp542 together coordinate Ca(2+).

In terms of assembly, monomer. Interacts with CLN5. Interacts with CLN3. It depends on Ca(2+) as a cofactor. Activated by autocatalytic proteolytical processing upon acidification. N-glycosylation is required for processing and activity.

The protein localises to the lysosome. It is found in the melanosome. It carries out the reaction Release of an N-terminal tripeptide from a polypeptide, but also has endopeptidase activity.. Lysosomal serine protease with tripeptidyl-peptidase I activity. May act as a non-specific lysosomal peptidase which generates tripeptides from the breakdown products produced by lysosomal proteinases. Requires substrates with an unsubstituted N-terminus. The protein is Tripeptidyl-peptidase 1 (Tpp1) of Mus musculus (Mouse).